A 197-amino-acid polypeptide reads, in one-letter code: Adenine phosphoribosyltransferase (197 aa).

This sequence belongs to the purine/pyrimidine phosphoribosyltransferase family. Homodimer.

The protein resides in the cytoplasm. It carries out the reaction AMP + diphosphate = 5-phospho-alpha-D-ribose 1-diphosphate + adenine. The protein operates within purine metabolism; AMP biosynthesis via salvage pathway; AMP from adenine: step 1/1. Functionally, catalyzes a salvage reaction resulting in the formation of AMP, that is energically less costly than de novo synthesis. In Ralstonia nicotianae (strain ATCC BAA-1114 / GMI1000) (Ralstonia solanacearum), this protein is Adenine phosphoribosyltransferase.